The following is a 575-amino-acid chain: DNA mismatch repair protein MutL (575 aa).

Belongs to the DNA mismatch repair MutL/HexB family.

Functionally, this protein is involved in the repair of mismatches in DNA. It is required for dam-dependent methyl-directed DNA mismatch repair. May act as a 'molecular matchmaker', a protein that promotes the formation of a stable complex between two or more DNA-binding proteins in an ATP-dependent manner without itself being part of a final effector complex. The polypeptide is DNA mismatch repair protein MutL (Dictyoglomus thermophilum (strain ATCC 35947 / DSM 3960 / H-6-12)).